The primary structure comprises 366 residues: S-adenosylmethionine synthase 1 (366 aa).

Glu18 serves as a coordination point for K(+). L-methionine-binding residues include Glu31 and Gln74. ATP is bound by residues 142–144 (DGN), 210–213 (SGRF), Asp221, 227–228 (RK), Ala244, Lys248, and Lys252. Position 221 (Asp221) interacts with L-methionine. Lys252 is an L-methionine binding site.

This sequence belongs to the AdoMet synthase family. In terms of assembly, homotetramer. Mn(2+) serves as cofactor. It depends on Mg(2+) as a cofactor. The cofactor is Co(2+). K(+) is required as a cofactor.

It is found in the cytoplasm. The catalysed reaction is L-methionine + ATP + H2O = S-adenosyl-L-methionine + phosphate + diphosphate. The protein operates within amino-acid biosynthesis; S-adenosyl-L-methionine biosynthesis; S-adenosyl-L-methionine from L-methionine: step 1/1. Functionally, catalyzes the formation of S-adenosylmethionine from methionine and ATP. The reaction comprises two steps that are both catalyzed by the same enzyme: formation of S-adenosylmethionine (AdoMet) and triphosphate, and subsequent hydrolysis of the triphosphate. The sequence is that of S-adenosylmethionine synthase 1 (SAMS1) from Pisum sativum (Garden pea).